Here is a 240-residue protein sequence, read N- to C-terminus: Uridylate kinase (240 aa).

Position 12–15 (12–15) interacts with ATP; sequence KLSG. Residues 20–25 are involved in allosteric activation by GTP; sequence GSQGFG. Glycine 54 serves as a coordination point for UMP. Glycine 55 and arginine 59 together coordinate ATP. Residues aspartate 74 and 135-142 contribute to the UMP site; that span reads TGNPYFST. ATP-binding residues include tyrosine 168 and aspartate 171.

Belongs to the UMP kinase family. As to quaternary structure, homohexamer.

It is found in the cytoplasm. The enzyme catalyses UMP + ATP = UDP + ADP. It participates in pyrimidine metabolism; CTP biosynthesis via de novo pathway; UDP from UMP (UMPK route): step 1/1. Allosterically activated by GTP. Inhibited by UTP. Its function is as follows. Catalyzes the reversible phosphorylation of UMP to UDP. This chain is Uridylate kinase, found in Desulfitobacterium hafniense (strain Y51).